The primary structure comprises 27 residues: Secretin (27 aa).

A Valine amide modification is found at Val-27.

It belongs to the glucagon family.

The protein resides in the secreted. Functionally, hormone involved in different processes, such as regulation of the pH of the duodenal content, food intake and water homeostasis. Exerts its biological effects by binding to secretin receptor (SCTR), a G-protein coupled receptor expressed in the basolateral domain of several cells. Acts as a key gastrointestinal hormone by regulating the pH of the duodenal content. Secreted by S cells of the duodenum in the crypts of Lieberkuehn and regulates the pH of the duodenum by (1) inhibiting the secretion of gastric acid from the parietal cells of the stomach and (2) stimulating the production of bicarbonate (NaHCO(3)) from the ductal cells of the pancreas. Production of bicarbonate is essential to neutralize the pH and ensure no damage is done to the small intestine by the gastric acid. In addition to regulating the pH of the duodenal content, plays a central role in diet induced thermogenesis: acts as a non-sympathetic brown fat (BAT) activator mediating prandial thermogenesis, which consequentially induces satiation. Mechanistically, secretin released by the gut after a meal binds to secretin receptor (SCTR) in brown adipocytes, activating brown fat thermogenesis by stimulating lipolysis, which is sensed in the brain and promotes satiation. Also able to stimulate lipolysis in white adipocytes. Also plays an important role in cellular osmoregulation: released into the systemic circulation in response to hyperosmolality and acts at different levels in the hypothalamus, pituitary and kidney to regulate water homeostasis. Also plays a role in the central nervous system, possibly by acting as a neuropeptide hormone: required for hippocampal synaptic function and neural progenitor cells maintenance. The protein is Secretin of Bos taurus (Bovine).